The chain runs to 154 residues: CASP-like protein 5B2 (154 aa).

Residues M1 to R17 lie on the Cytoplasmic side of the membrane. Residues V18–A38 traverse the membrane as a helical segment. Over S39–A42 the chain is Extracellular. Residues F43–L63 form a helical membrane-spanning segment. Residues D64–D87 are Cytoplasmic-facing. The chain crosses the membrane as a helical span at residues W88–L107. Over F108–T130 the chain is Extracellular. The helical transmembrane segment at A131–L151 threads the bilayer. Residues A152 to F154 lie on the Cytoplasmic side of the membrane.

The protein belongs to the Casparian strip membrane proteins (CASP) family. Homodimer and heterodimers.

It is found in the cell membrane. The sequence is that of CASP-like protein 5B2 from Zea mays (Maize).